The sequence spans 389 residues: Chalcone synthase 1A (389 aa).

The active site involves cysteine 164.

Belongs to the thiolase-like superfamily. Chalcone/stilbene synthases family.

It catalyses the reaction (E)-4-coumaroyl-CoA + 3 malonyl-CoA + 3 H(+) = 2',4,4',6'-tetrahydroxychalcone + 3 CO2 + 4 CoA. It participates in secondary metabolite biosynthesis; flavonoid biosynthesis. In terms of biological role, the primary product of this enzyme is 4,2',4',6'-tetrahydroxychalcone (also termed naringenin-chalcone or chalcone) which can under specific conditions spontaneously isomerize into naringenin. This chain is Chalcone synthase 1A (CHS-1A), found in Pisum sativum (Garden pea).